The following is a 226-amino-acid chain: MIRVRLVIAQCTVDYVGRLTAHLPSARRLLLFKADGSVSVHADDRAYKPLNWMSPPCWLTEEPGGDSPVWVVTNKGGEQLRISVEEIEHDSSHELGVDPGLVKDGVEAHLQVLLAEHVQLLGEGYTLVRREYMTAIGPVDLLCRDESGGAVAVEIKRRGEIDGVEQLTRYLELLNRDSVLAPVKGVFAAQQIKPQARTLATDRGIRCVTLDYDKMRGMDSDEYRLF.

This sequence belongs to the NucS endonuclease family.

It is found in the cytoplasm. In terms of biological role, cleaves both 3' and 5' ssDNA extremities of branched DNA structures. This chain is Endonuclease NucS, found in Mycobacterium ulcerans (strain Agy99).